The chain runs to 284 residues: Pantothenate synthetase (284 aa).

Position 30 to 37 (30 to 37 (MGNLHEGH)) interacts with ATP. His37 (proton donor) is an active-site residue. Gln61 serves as a coordination point for (R)-pantoate. Gln61 is a beta-alanine binding site. 149–152 (GEKD) lines the ATP pocket. Gln155 contributes to the (R)-pantoate binding site. Residues Val178 and 186–189 (LSSR) contribute to the ATP site.

The protein belongs to the pantothenate synthetase family. Homodimer.

It is found in the cytoplasm. The catalysed reaction is (R)-pantoate + beta-alanine + ATP = (R)-pantothenate + AMP + diphosphate + H(+). Its pathway is cofactor biosynthesis; (R)-pantothenate biosynthesis; (R)-pantothenate from (R)-pantoate and beta-alanine: step 1/1. In terms of biological role, catalyzes the condensation of pantoate with beta-alanine in an ATP-dependent reaction via a pantoyl-adenylate intermediate. The sequence is that of Pantothenate synthetase from Yersinia enterocolitica serotype O:8 / biotype 1B (strain NCTC 13174 / 8081).